Here is a 362-residue protein sequence, read N- to C-terminus: Heat-inducible transcription repressor HrcA (362 aa).

It belongs to the HrcA family.

Negative regulator of class I heat shock genes (grpE-dnaK-dnaJ and groELS operons). Prevents heat-shock induction of these operons. In Rhizobium etli (strain CIAT 652), this protein is Heat-inducible transcription repressor HrcA.